Reading from the N-terminus, the 1074-residue chain is MAPGMSGRRGAALLCLSVLLAHAASRSHPASPSPPGTQASPILPVSYRLSHTRLAFFLKEARPLTPAAINGSLQRSEPFVVFQTKELPVLNVSLGPFSTSQVVARELLQPSSTLDIPERLTVNWKVRAFIVRARVPASQPVAQVLFYVAGRDWDDFGVTERLPCVRLHAFRDAREVRSSCRLGGALATCLVRAELPLAWFGPPAPAAPPSARRKSPDGLEPEAAAESQQVELYYTLHAPDASGGCGSARRGPGPGPGAAARAESPTQHPLLRIGSISLFRPPPRRAVQEHRLDSNLMIRLPDRPLRPGEVLSILLYLAPNSSSAASPSVEHFTLRVKAKKGVTLLGTKSRSGQWRVTSELLTGAKHSTATVDVAWALDTPLPPWEGQGPLEILQLDFEMENFTSQSVKRRIMWHIDYRGHSALPDLERAVTELTVIQRDVQAILPLAMDTEIINTAILTGRTVAIPVKVIAIEVTGLVLDVSDLVECQSHSEDIIKVSSSCDYVFVSGKESRGSMNARVTFRYDVLSAPLEMTVWVPKLPLHIELSDARLSQVKGWRVPILPDRRSARESEDEEEEEEERRQSANRGCTLQYQHATLQVFTQFHTTSSEGTDQVVTMLGPDWLVEVTDLVSDFMRVGDPRVAHLVDSNTLAGLEPGTTPFKVVSPLTEAVLGETLLTVTEEKVSITQLQAQVVASLTLSLRPSPGSSHTILATTAAQPTLSLVKQEALLSLWLSYSDGTTAPLSLYSSRDYGLLVSSLDERVATVTQDKAFPLVVAEAEGSGDLLRAELTISESCQKTKRKSVLATTPVSLRVHFGRDEEDPTYDYPGPSQPGPGGGEDEARGAGPPGTAIPAGEVPGLGTAGPVPPTEDYLPLPTGFLQMPRGLTDLEIGMYALLGVFCLAILVFLINCIVFVLRYRHKRIPPEGQTSMDHSHHWVFLGNGQPLRVQGELSPPAGSALETVPACCHGDHHSSGSSQTSVQSQVHGRGDGSSGGSARDQTEDPASSPTSKRKRVKFTTFTTLPTEELAYDSVPAGEEEDEEEDLGWGCPDVAGTTRPTPPPDLHNYMRRIKDIA.

An N-terminal signal peptide occupies residues 1-23 (MAPGMSGRRGAALLCLSVLLAHA). The Extracellular portion of the chain corresponds to 26–894 (RSHPASPSPP…LTDLEIGMYA (869 aa)). 2 N-linked (GlcNAc...) asparagine glycosylation sites follow: N70 and N91. Disordered stretches follow at residues 205-224 (PAAP…PEAA) and 243-266 (GGCG…ESPT). A compositionally biased stretch (low complexity) spans 247 to 262 (SARRGPGPGPGAAARA). 2 N-linked (GlcNAc...) asparagine glycosylation sites follow: N320 and N401. 2 disordered regions span residues 564 to 587 (RRSA…ANRG) and 816 to 867 (GRDE…PVPP). Low complexity predominate over residues 843–854 (GAGPPGTAIPAG). The chain crosses the membrane as a helical span at residues 895–915 (LLGVFCLAILVFLINCIVFVL). Over 916 to 1074 (RYRHKRIPPE…NYMRRIKDIA (159 aa)) the chain is Cytoplasmic. Residues 962-1064 (VPACCHGDHH…TRPTPPPDLH (103 aa)) are disordered. Low complexity-rich tracts occupy residues 973-985 (SGSS…SQVH) and 1016-1026 (FTTFTTLPTEE). Residues 1035–1044 (GEEEDEEEDL) show a composition bias toward acidic residues.

It belongs to the TMEM132 family. In terms of tissue distribution, widely expressed, with highest levels in the cochlea. In the cochlea, detected in spiral ganglion, the organ of Corti and stria vascularis. In the organ of Corti, prominently expressed in the outer and inner hair cells, especially at the apical and basal region of the outer hair cell body (at protein level).

The protein resides in the membrane. Its function is as follows. Required for normal inner ear hair cell function and hearing. The chain is Transmembrane protein 132E (Tmem132e) from Mus musculus (Mouse).